Reading from the N-terminus, the 68-residue chain is MAVQQNKVSKSRRNMRRAHDALVAANPNECGNCGELKRPHHVCAACGHYDDREVVAQADEIELDEDAA.

The protein belongs to the bacterial ribosomal protein bL32 family.

The polypeptide is Large ribosomal subunit protein bL32 (Ruegeria pomeroyi (strain ATCC 700808 / DSM 15171 / DSS-3) (Silicibacter pomeroyi)).